A 47-amino-acid polypeptide reads, in one-letter code: Potamin-1 (47 aa).

Intrachain disulfides connect Cys3-Cys40, Cys6-Cys24, and Cys7-Cys36.

Functionally, inhibitor of serine proteases chymotrypsin, papain and trypsin. Has strong antifungal activity against C.albicans and R.solani. Has antibacterial activity against the Gram-positive bacterium C.michiganense, but lacks antibacterial activity against the Gram-positive bacterium S.aureus. Lacks hemolytic activity against human erythrocytes. The chain is Potamin-1 from Solanum tuberosum (Potato).